The primary structure comprises 343 residues: Ribosomal RNA small subunit methyltransferase C (343 aa).

It belongs to the methyltransferase superfamily. RsmC family. Monomer.

Its subcellular location is the cytoplasm. It carries out the reaction guanosine(1207) in 16S rRNA + S-adenosyl-L-methionine = N(2)-methylguanosine(1207) in 16S rRNA + S-adenosyl-L-homocysteine + H(+). Its function is as follows. Specifically methylates the guanine in position 1207 of 16S rRNA in the 30S particle. The protein is Ribosomal RNA small subunit methyltransferase C of Escherichia coli O6:H1 (strain CFT073 / ATCC 700928 / UPEC).